The sequence spans 505 residues: MGEKNSSKVLTTGFGIPVGDDQNSLTAGNRGPVLMQDVHLLDKLSHFDHERIPERVVHAKGAGAGGYFEVTADVTKYTKAKFLSEIGKRTEVFVRFSTVGGEKGSADSARDPRGFAVKFYTEDGNYDLVGNNTPVFFIRDPLKFPDFIHTQKRNPATNCKDPDMFWDFLSLTPESIHQVTILFSDRGTPATYRNMNGYSSHTYKWYNEKGEYFWVQYHFKTDQGIKNLTLEEAEKIGGSDPDHATRDLYEAIKKGDYPSWTLEMQIMTPEQAEDYRFDIRDITKVWPHGDFPTMKIGKLVLNRNPTNYFAEVEQAAFSPANLVPGIGISPDKMLQGRVFSYHDTHIHRLGPNYNLIPVNAPKYSPENSYQRDGFMRVDANGGSGPNYWPNSFGGPSPDSVYLEPPFGVSGLAARTLYTHPNDDFVQAGNLYRDVMTDYDRENLVGNIVSHLSAAQKRIQLRQTALFFKADRDYGSRVAKGLELDIKEVERLANMTNEERARATER.

Catalysis depends on residues H58 and N131. Y341 lines the heme pocket.

Belongs to the catalase family. Heme is required as a cofactor.

The catalysed reaction is 2 H2O2 = O2 + 2 H2O. Its function is as follows. Decomposes hydrogen peroxide into water and oxygen; serves to protect cells from the toxic effects of hydrogen peroxide. The sequence is that of Catalase (kat) from Methanosarcina barkeri (strain Fusaro / DSM 804).